Consider the following 356-residue polypeptide: MADAAVIEKLEEGFKKLEAATDCKSLLKKYLTKSVFDQLKGKKTSLGATLLDVIQSGVENLDSGVGVYAPDAEAYTLFAPLFDPIIEDYHKGFKQTDKHPNKDFGDVNQFVNVDPDGKFVISTRVRCGRSMEGYPFNPCLTEAQYKEMESKVSSTLSNLEGELKGTYYPLTGMTKDVQQKLIDDHFLFKEGDRFLQAANACRYWPTGRGIYHNDNKTFLVWCNEEDHLRIISMQMGGDLGQVYRRLVSAVNEIEKRVPFSHHDRLGFLTFCPTNLGTTVRASVHIKLPKLAANREKLEEVAGKYSLQVRGTRGEHTEAEGGVYDISNKRRMGLTEFQAVKEMQDGILELIKMEKEM.

The Phosphagen kinase N-terminal domain occupies 9–91 (KLEEGFKKLE…FDPIIEDYHK (83 aa)). Residue 64-68 (GVGVY) participates in L-arginine binding. Positions 119-356 (FVISTRVRCG…LELIKMEKEM (238 aa)) constitute a Phosphagen kinase C-terminal domain. ATP contacts are provided by residues 122–126 (STRVR) and His185. Residue Glu225 coordinates L-arginine. ATP is bound at residue Arg229. Position 271 (Cys271) interacts with L-arginine. ATP is bound by residues 280-284 (RASVH) and 309-314 (RGTRGE). Residue Glu314 coordinates L-arginine.

This sequence belongs to the ATP:guanido phosphotransferase family. Muscle (at protein level).

The catalysed reaction is L-arginine + ATP = N(omega)-phospho-L-arginine + ADP + H(+). Catalyzes the reversible transfer of high energy ATP gamma-phosphate group to L-arginine. This Scylla serrata (Mud crab) protein is Arginine kinase Scy s 2.